A 232-amino-acid chain; its full sequence is RNA chaperone ProQ (232 aa).

A disordered region spans residues 105 to 182 (EAKARVQAQR…REEQHTPVSD (78 aa)). The span at 117–136 (QQAKKREAAAAAGEKEDAPR) shows a compositional bias: basic and acidic residues. A compositionally biased stretch (basic residues) spans 137 to 146 (RERKPRPTTP). Positions 147 to 177 (RRKEGAERKPRAQKPVEKAPKTVKAPREEQH) are enriched in basic and acidic residues.

This sequence belongs to the ProQ family.

It localises to the cytoplasm. Functionally, RNA chaperone with significant RNA binding, RNA strand exchange and RNA duplexing activities. May regulate ProP activity through an RNA-based, post-transcriptional mechanism. This chain is RNA chaperone ProQ, found in Shigella boydii serotype 18 (strain CDC 3083-94 / BS512).